Here is a 250-residue protein sequence, read N- to C-terminus: 5'-nucleotidase SurE (250 aa).

Positions 8, 9, 39, and 95 each coordinate a divalent metal cation.

It belongs to the SurE nucleotidase family. A divalent metal cation serves as cofactor.

It localises to the cytoplasm. It carries out the reaction a ribonucleoside 5'-phosphate + H2O = a ribonucleoside + phosphate. Nucleotidase that shows phosphatase activity on nucleoside 5'-monophosphates. The chain is 5'-nucleotidase SurE from Cupriavidus taiwanensis (strain DSM 17343 / BCRC 17206 / CCUG 44338 / CIP 107171 / LMG 19424 / R1) (Ralstonia taiwanensis (strain LMG 19424)).